The primary structure comprises 160 residues: Lymphocyte antigen 96 (160 aa).

The first 16 residues, 1–16 (MLPFILFSTLLPLIFT), serve as a signal peptide directing secretion. Cystine bridges form between Cys-25/Cys-51, Cys-37/Cys-148, and Cys-95/Cys-105. N-linked (GlcNAc...) asparagine glycans are attached at residues Asn-26, Asn-77, and Asn-101. The tract at residues 119 to 123 (FSFKG) is interaction with lipopolysaccharide. N-linked (GlcNAc...) asparagine glycosylation occurs at Asn-150.

Heterogeneous homomer formed from homodimers; disulfide-linked. Belongs to the lipopolysaccharide (LPS) receptor, a multi-protein complex containing at least CD14, LY96 and TLR4. Binds to the extracellular domains of TLR2 and TLR4. Ligand binding induces interaction with TLR4 and oligomerization of the complex. In terms of processing, N-glycosylated.

It localises to the secreted. The protein resides in the extracellular space. In terms of biological role, binds bacterial lipopolysaccharide (LPS). Cooperates with TLR4 in the innate immune response to bacterial lipopolysaccharide (LPS), and with TLR2 in the response to cell wall components from Gram-positive and Gram-negative bacteria. Enhances TLR4-dependent activation of NF-kappa-B. Cells expressing both LY96 and TLR4, but not TLR4 alone, respond to LPS. The polypeptide is Lymphocyte antigen 96 (LY96) (Cricetulus griseus (Chinese hamster)).